Here is a 109-residue protein sequence, read N- to C-terminus: Cell division protein FtsL (109 aa).

Topologically, residues 1–3 are cytoplasmic; that stretch reads MSR. A helical transmembrane segment spans residues 4–21; sequence LNIFLLIIVMGCALSVVN. Residues 22–109 are Periplasmic-facing; the sequence is STNQQRQIFI…ASAAPTGGAR (88 aa).

Belongs to the FtsL family. In terms of assembly, part of a complex composed of FtsB, FtsL and FtsQ.

The protein localises to the cell inner membrane. Functionally, essential cell division protein. May link together the upstream cell division proteins, which are predominantly cytoplasmic, with the downstream cell division proteins, which are predominantly periplasmic. The chain is Cell division protein FtsL from Burkholderia pseudomallei (strain K96243).